The following is a 396-amino-acid chain: Actin-related protein 6 (396 aa).

This sequence belongs to the actin family. ARP6 subfamily. Interacts with CBX1 and CBX3.

Its subcellular location is the cytoplasm. The protein resides in the cytoskeleton. It localises to the nucleus. It is found in the nucleolus. Required for formation and/or maintenance of the proper nucleolar structure and function. Plays a dual role in the regulation of ribosomal DNA (rDNA) transcription. In the presence of high glucose, it maintains active rDNA transcription through H2A.Z deposition and under glucose starvation, is required for the repression of rDNA transcription, and this function may be independent of H2A.Z. The chain is Actin-related protein 6 (ACTR6) from Gallus gallus (Chicken).